A 493-amino-acid chain; its full sequence is Lysine--tRNA ligase (493 aa).

Mg(2+) contacts are provided by E402 and E409.

Belongs to the class-II aminoacyl-tRNA synthetase family. As to quaternary structure, homodimer. Mg(2+) is required as a cofactor.

It localises to the cytoplasm. It carries out the reaction tRNA(Lys) + L-lysine + ATP = L-lysyl-tRNA(Lys) + AMP + diphosphate. The polypeptide is Lysine--tRNA ligase (Ureaplasma urealyticum serovar 10 (strain ATCC 33699 / Western)).